Here is a 91-residue protein sequence, read N- to C-terminus: Putative methyltransferase YfdM (91 aa).

This Escherichia coli (strain K12) protein is Putative methyltransferase YfdM (yfdM).